A 704-amino-acid chain; its full sequence is Elongation factor G (704 aa).

Residues 8–291 form the tr-type G domain; it reads DRVRNIGIMA…AVIEYLASPV (284 aa). GTP contacts are provided by residues 17-24, 90-94, and 144-147; these read AHIDAGKT, DTPGH, and NKMD.

It belongs to the TRAFAC class translation factor GTPase superfamily. Classic translation factor GTPase family. EF-G/EF-2 subfamily.

The protein localises to the cytoplasm. Its function is as follows. Catalyzes the GTP-dependent ribosomal translocation step during translation elongation. During this step, the ribosome changes from the pre-translocational (PRE) to the post-translocational (POST) state as the newly formed A-site-bound peptidyl-tRNA and P-site-bound deacylated tRNA move to the P and E sites, respectively. Catalyzes the coordinated movement of the two tRNA molecules, the mRNA and conformational changes in the ribosome. The sequence is that of Elongation factor G from Chlorobium chlorochromatii (strain CaD3).